An 88-amino-acid polypeptide reads, in one-letter code: Small ribosomal subunit protein bS20 (88 aa).

Residues 1 to 25 (MANSAQARKRARQATKARAHNASLR) form a disordered region. The segment covering 7–19 (ARKRARQATKARA) has biased composition (basic residues).

Belongs to the bacterial ribosomal protein bS20 family.

Its function is as follows. Binds directly to 16S ribosomal RNA. In Azoarcus sp. (strain BH72), this protein is Small ribosomal subunit protein bS20.